The chain runs to 111 residues: Somatostatin-1B (111 aa).

Residues 1–19 (MQLLSSLVSLLLVLYSVRA) form the signal peptide. Positions 20 to 87 (AAVLPVEERN…RLEERAVYNR (68 aa)) are excised as a propeptide. Cysteine 100 and cysteine 111 are oxidised to a cystine.

This sequence belongs to the somatostatin family.

Its subcellular location is the secreted. Its function is as follows. Somatostatin inhibits the release of somatotropin. The chain is Somatostatin-1B (sst1b) from Carassius auratus (Goldfish).